A 141-amino-acid chain; its full sequence is 6,7-dimethyl-8-ribityllumazine synthase (141 aa).

5-amino-6-(D-ribitylamino)uracil-binding positions include Phe-13, 45–47 (SFE), and 69–71 (AII). 74–75 (DT) contributes to the (2S)-2-hydroxy-3-oxobutyl phosphate binding site. His-77 (proton donor) is an active-site residue. Leu-102 is a binding site for 5-amino-6-(D-ribitylamino)uracil. Residue Arg-117 participates in (2S)-2-hydroxy-3-oxobutyl phosphate binding.

Belongs to the DMRL synthase family.

The enzyme catalyses (2S)-2-hydroxy-3-oxobutyl phosphate + 5-amino-6-(D-ribitylamino)uracil = 6,7-dimethyl-8-(1-D-ribityl)lumazine + phosphate + 2 H2O + H(+). Its pathway is cofactor biosynthesis; riboflavin biosynthesis; riboflavin from 2-hydroxy-3-oxobutyl phosphate and 5-amino-6-(D-ribitylamino)uracil: step 1/2. Catalyzes the formation of 6,7-dimethyl-8-ribityllumazine by condensation of 5-amino-6-(D-ribitylamino)uracil with 3,4-dihydroxy-2-butanone 4-phosphate. This is the penultimate step in the biosynthesis of riboflavin. This chain is 6,7-dimethyl-8-ribityllumazine synthase, found in Methanopyrus kandleri (strain AV19 / DSM 6324 / JCM 9639 / NBRC 100938).